The primary structure comprises 182 residues: Ribosome maturation factor RimM (182 aa).

One can recognise a PRC barrel domain in the interval 102-182; that stretch reads EEDDYYWKDL…RVEVDWDPGF (81 aa).

The protein belongs to the RimM family. As to quaternary structure, binds ribosomal protein uS19.

Its subcellular location is the cytoplasm. Its function is as follows. An accessory protein needed during the final step in the assembly of 30S ribosomal subunit, possibly for assembly of the head region. Essential for efficient processing of 16S rRNA. May be needed both before and after RbfA during the maturation of 16S rRNA. It has affinity for free ribosomal 30S subunits but not for 70S ribosomes. The polypeptide is Ribosome maturation factor RimM (Yersinia pseudotuberculosis serotype IB (strain PB1/+)).